Reading from the N-terminus, the 119-residue chain is Ribosome-binding factor A (119 aa).

Belongs to the RbfA family. In terms of assembly, monomer. Binds 30S ribosomal subunits, but not 50S ribosomal subunits or 70S ribosomes.

The protein resides in the cytoplasm. One of several proteins that assist in the late maturation steps of the functional core of the 30S ribosomal subunit. Associates with free 30S ribosomal subunits (but not with 30S subunits that are part of 70S ribosomes or polysomes). Required for efficient processing of 16S rRNA. May interact with the 5'-terminal helix region of 16S rRNA. The polypeptide is Ribosome-binding factor A (Geobacter sp. (strain M21)).